We begin with the raw amino-acid sequence, 86 residues long: RQC P-site tRNA stabilizing factor (86 aa).

The 62-residue stretch at 1-62 (MRLDKFLKVS…QKLVTVQVNE (62 aa)) folds into the S4 RNA-binding domain.

The protein belongs to the RqcP family. As to quaternary structure, associates with stalled 50S ribosomal subunits. Binds to RqcH, 23S rRNA and the P-site tRNA. Does not require RqcH for association with 50S subunits. Crystallized 50S subunits are variously associated with an A/P-site tRNA with or without RqcH, as well as with P- and E-site tRNAs but no RqcH. Displaced from the 50S subunit by puromycin but not thiostrepton.

In terms of biological role, key component of the ribosome quality control system (RQC), a ribosome-associated complex that mediates the extraction of incompletely synthesized nascent chains from stalled ribosomes and their subsequent degradation. RqcH recruits Ala-charged tRNA, and with RqcP directs the elongation of stalled nascent chains on 50S ribosomal subunits, leading to non-templated C-terminal alanine extensions (Ala tail). The Ala tail promotes nascent chain degradation. RqcP is associated with the translocation-like movement of the peptidyl-tRNA from the A-site into the P-site. RqcH, RqcP and charged tRNA(Ala) are necessary and sufficient to add an Ala tail to a model stalled nascent peptide; does not add Val. This chain is RQC P-site tRNA stabilizing factor, found in Bacillus subtilis (strain 168).